The primary structure comprises 131 residues: Fluoride-specific ion channel FluC (131 aa).

The next 4 membrane-spanning stretches (helical) occupy residues 10–30 (AAVAIGGALGAVCRYLLSGLV), 36–56 (FPMGTVLVNVLGSFVLGFLTW), 71–91 (LATVGFCGGLTTLSTMAYETV), and 99–119 (VLSILYLTANVVLGIAAVLGG). 2 residues coordinate Na(+): Gly78 and Thr81.

It belongs to the fluoride channel Fluc/FEX (TC 1.A.43) family.

The protein localises to the cell membrane. The enzyme catalyses fluoride(in) = fluoride(out). Its activity is regulated as follows. Na(+) is not transported, but it plays an essential structural role and its presence is essential for fluoride channel function. Fluoride-specific ion channel. Important for reducing fluoride concentration in the cell, thus reducing its toxicity. In Methanopyrus kandleri (strain AV19 / DSM 6324 / JCM 9639 / NBRC 100938), this protein is Fluoride-specific ion channel FluC.